An 87-amino-acid polypeptide reads, in one-letter code: Small ribosomal subunit protein bS18B (87 aa).

Belongs to the bacterial ribosomal protein bS18 family. As to quaternary structure, part of the 30S ribosomal subunit. Forms a tight heterodimer with protein bS6.

Binds as a heterodimer with protein bS6 to the central domain of the 16S rRNA, where it helps stabilize the platform of the 30S subunit. The protein is Small ribosomal subunit protein bS18B of Mycolicibacterium vanbaalenii (strain DSM 7251 / JCM 13017 / BCRC 16820 / KCTC 9966 / NRRL B-24157 / PYR-1) (Mycobacterium vanbaalenii).